The following is a 216-amino-acid chain: MERGETPEEERQSGCVLPTSPESDSLKTSNWGFLITGVIGGALVTVYAVTTPFIAPALRKVCLPFVPATSRQVENVVKMLQHRRGPLVDIGSGDGRIVIAAAKAGFPAVGYELNPWLVWYSRYRAWREGVHGSAKFYISDLWKVTFAQYSNVVIFGVPQMMPQLEKKLEFELEDGARVIACRFPFPHWTPDHTTGEGIDTVWAYDMSACRTQGKRA.

Residue M1 is modified to N-acetylmethionine. Positions 1 to 12 (MERGETPEEERQ) are enriched in basic and acidic residues. The disordered stretch occupies residues 1–25 (MERGETPEEERQSGCVLPTSPESDS). A helical transmembrane segment spans residues 31–50 (WGFLITGVIGGALVTVYAVT). Residues 51–85 (TPFIAPALRKVCLPFVPATSRQVENVVKMLQHRRG) form a required for mitochondrial location region.

The protein belongs to the ANT/ATPSC lysine N-methyltransferase family.

It localises to the mitochondrion membrane. It catalyses the reaction L-lysyl-[protein] + 3 S-adenosyl-L-methionine = N(6),N(6),N(6)-trimethyl-L-lysyl-[protein] + 3 S-adenosyl-L-homocysteine + 3 H(+). Functionally, mitochondrial protein-lysine N-methyltransferase that trimethylates ATP synthase subunit C, ATP5MC1 and ATP5MC2. Trimethylation is required for proper incorporation of the C subunit into the ATP synthase complex and mitochondrial respiration. Promotes chronic pain. Involved in persistent inflammatory and neuropathic pain: methyltransferase activity in the mitochondria of sensory neurons promotes chronic pain via a pathway that depends on the production of reactive oxygen species (ROS) and on the engagement of spinal cord microglia. This chain is ATP synthase subunit C lysine N-methyltransferase (Atpsckmt), found in Rattus norvegicus (Rat).